We begin with the raw amino-acid sequence, 310 residues long: ATP-dependent protease (310 aa).

The 163-residue stretch at 24–186 (RLNQCFFKFK…TPNQKEENYF (163 aa)) folds into the Integrase catalytic domain.

The polypeptide is ATP-dependent protease (Lactococcus lactis subsp. lactis (Streptococcus lactis)).